We begin with the raw amino-acid sequence, 208 residues long: Meiotically up-regulated gene 9 protein (208 aa).

The interval 77-114 (VPASNEKAARVSNLKTVPSLKRENKEVNANSKPPVKQQ) is disordered.

Functionally, has a role in meiosis. The polypeptide is Meiotically up-regulated gene 9 protein (mug9) (Schizosaccharomyces pombe (strain 972 / ATCC 24843) (Fission yeast)).